A 336-amino-acid polypeptide reads, in one-letter code: D-alanine--D-alanine ligase (336 aa).

The ATP-grasp domain occupies 124–330 (KMWFSALGVP…FTEYLIDVIG (207 aa)). ATP is bound at residue 154–209 (AFDNWGSVFVKAASQGSSVGCYKVDVKANIANVLKDAFSYAPYVVVEQTIHARELE). The Mg(2+) site is built by aspartate 284, glutamate 297, and asparagine 299.

This sequence belongs to the D-alanine--D-alanine ligase family. The cofactor is Mg(2+). It depends on Mn(2+) as a cofactor.

The protein resides in the cytoplasm. It carries out the reaction 2 D-alanine + ATP = D-alanyl-D-alanine + ADP + phosphate + H(+). The protein operates within cell wall biogenesis; peptidoglycan biosynthesis. Its function is as follows. Cell wall formation. The sequence is that of D-alanine--D-alanine ligase from Shewanella frigidimarina (strain NCIMB 400).